Reading from the N-terminus, the 74-residue chain is Cytochrome c oxidase assembly factor 5 (74 aa).

The 39-residue stretch at 27-65 folds into the CHCH domain; that stretch reads QSDCVLKEGKSPRQCLKEGNCKALKYSFFECKRSMLDAR. The Cx10C motif motif lies at 30–41; it reads CVLKEGKSPRQC. Cystine bridges form between C30–C57 and C41–C47. At S37 the chain carries Phosphoserine. The short motif at 47 to 57 is the Cx9C motif element; it reads CKALKYSFFEC.

It belongs to the PET191 family.

Its function is as follows. Involved in an early step of the mitochondrial complex IV assembly process. In Bos taurus (Bovine), this protein is Cytochrome c oxidase assembly factor 5 (COA5).